The sequence spans 432 residues: Patatin-like phospholipase domain-containing protein 5 (432 aa).

Positions 12–181 (LSFSGSGYMG…SNNLPFSDCP (170 aa)) constitute a PNPLA domain. The GXGXXG motif lies at 16–21 (GSGYMG). Residues 47–51 (GSSSG) carry the GXSXG motif. S49 serves as the catalytic Nucleophile. D168 functions as the Proton acceptor in the catalytic mechanism. A DGA/G motif is present at residues 168–170 (DGA). Residues 404–423 (ADSGLLRQQRGTAPSGNRPL) form a disordered region.

The enzyme catalyses a triacylglycerol + H2O = a diacylglycerol + a fatty acid + H(+). Has abundant triacylglycerol lipase activity. The sequence is that of Patatin-like phospholipase domain-containing protein 5 from Mus musculus (Mouse).